A 423-amino-acid polypeptide reads, in one-letter code: Large ribosomal subunit protein mL37 (423 aa).

A mitochondrion-targeting transit peptide spans 1-29; that stretch reads MALASGPALRALAGSGRLGLGGYGTPKRG.

Belongs to the mitochondrion-specific ribosomal protein mL37 family. As to quaternary structure, component of the mitochondrial ribosome large subunit (39S) which comprises a 16S rRNA and about 50 distinct proteins.

The protein localises to the mitochondrion. This chain is Large ribosomal subunit protein mL37 (Mrpl37), found in Mus musculus (Mouse).